Consider the following 263-residue polypeptide: Protein PYRICULARIA ORYZAE RESISTANCE 21 (263 aa).

The HMA domain occupies 1–68 (MGILVISVDL…IWCKAGKIIK (68 aa)). Cys-12 and Cys-15 together coordinate a metal cation. The segment at 126-153 (CEKPKPCEKPPPCKPEEPPKPPPEKPPP) is disordered. The segment covering 139–153 (KPEEPPKPPPEKPPP) has biased composition (basic and acidic residues).

Involved in defense responses. Contributes to slowing defense responses toward Magnaporthe oryzae. This chain is Protein PYRICULARIA ORYZAE RESISTANCE 21, found in Oryza sativa subsp. indica (Rice).